The sequence spans 353 residues: S-adenosylmethionine:tRNA ribosyltransferase-isomerase (353 aa).

This sequence belongs to the QueA family. As to quaternary structure, monomer.

It is found in the cytoplasm. The catalysed reaction is 7-aminomethyl-7-carbaguanosine(34) in tRNA + S-adenosyl-L-methionine = epoxyqueuosine(34) in tRNA + adenine + L-methionine + 2 H(+). Its pathway is tRNA modification; tRNA-queuosine biosynthesis. Its function is as follows. Transfers and isomerizes the ribose moiety from AdoMet to the 7-aminomethyl group of 7-deazaguanine (preQ1-tRNA) to give epoxyqueuosine (oQ-tRNA). This chain is S-adenosylmethionine:tRNA ribosyltransferase-isomerase, found in Burkholderia vietnamiensis (strain G4 / LMG 22486) (Burkholderia cepacia (strain R1808)).